Here is a 272-residue protein sequence, read N- to C-terminus: Undecaprenyl-diphosphatase (272 aa).

7 helical membrane-spanning segments follow: residues 42 to 62 (FGLS…VVFF), 92 to 112 (YLVL…EDFF), 120 to 140 (WVVV…EAVG), 149 to 169 (MGFA…VPGV), 194 to 214 (FLMS…EVLA), 224 to 244 (MFAV…RFFI), and 252 to 272 (LRAF…LLLL).

Belongs to the UppP family.

The protein resides in the cell membrane. The enzyme catalyses di-trans,octa-cis-undecaprenyl diphosphate + H2O = di-trans,octa-cis-undecaprenyl phosphate + phosphate + H(+). In terms of biological role, catalyzes the dephosphorylation of undecaprenyl diphosphate (UPP). Confers resistance to bacitracin. The chain is Undecaprenyl-diphosphatase from Rubrobacter xylanophilus (strain DSM 9941 / JCM 11954 / NBRC 16129 / PRD-1).